The primary structure comprises 150 residues: Large ribosomal subunit protein uL13 (150 aa).

It belongs to the universal ribosomal protein uL13 family. In terms of assembly, part of the 50S ribosomal subunit.

In terms of biological role, this protein is one of the early assembly proteins of the 50S ribosomal subunit, although it is not seen to bind rRNA by itself. It is important during the early stages of 50S assembly. The chain is Large ribosomal subunit protein uL13 from Chlorobium phaeobacteroides (strain BS1).